Here is a 344-residue protein sequence, read N- to C-terminus: Beta-1,4-galactosyltransferase 4 (344 aa).

The Cytoplasmic portion of the chain corresponds to 1-12 (MGFNLTFHLSYK). A helical; Signal-anchor for type II membrane protein transmembrane segment spans residues 13–38 (FRLLLLLTLCLTVVGWATSNYFVGAI). Residues 39–344 (QEIPKAKEFM…NITVDFWFGA (306 aa)) are Lumenal-facing. An intrachain disulfide couples C77 to C118. Residues 129–133 (PHRNR), 168–170 (FNR), and 195–196 (VD) each bind UDP-alpha-D-galactose. A disulfide bridge links C189 with C208. D196 serves as a coordination point for Mn(2+). N220 carries N-linked (GlcNAc...) asparagine glycosylation. 2 residues coordinate UDP-alpha-D-galactose: Y224 and W256. 258-261 (GEDD) serves as a coordination point for N-acetyl-D-glucosamine. H289 contacts Mn(2+). 289 to 291 (HTR) provides a ligand contact to UDP-alpha-D-galactose. R301 contacts N-acetyl-D-glucosamine. A glycan (N-linked (GlcNAc...) asparagine) is linked at N335.

It belongs to the glycosyltransferase 7 family. In terms of assembly, interacts with SLC35A2 (isoform 2; UGT1). The cofactor is Mn(2+). In terms of processing, N-glycosylated. As to expression, highest expression is observed in placenta, pancreas, kidney and heart. Expressed in corneal epithelial cells.

The protein resides in the golgi apparatus membrane. It is found in the secreted. It catalyses the reaction N-acetyl-D-glucosamine + UDP-alpha-D-galactose = beta-D-galactosyl-(1-&gt;4)-N-acetyl-D-glucosamine + UDP + H(+). It carries out the reaction a beta-D-GlcNAc-(1-&gt;3)-beta-D-Gal-(1-&gt;4)-beta-D-Glc-(1&lt;-&gt;1)-Cer(d18:1(4E)) + UDP-alpha-D-galactose = a neolactoside nLc4Cer(d18:1(4E)) + UDP + H(+). The enzyme catalyses 3-O-{beta-D-galactosyl-(1-&gt;3)-[6-O-sulfo-N-acetyl-beta-D-glucosaminyl-(1-&gt;6)]-N-acetyl-alpha-D-galactosaminyl}-L-seryl-[protein] + UDP-alpha-D-galactose = 3-O-{beta-D-galactosyl-(1-&gt;3)-[beta-D-galactosyl-(1-&gt;4)-6-O-sulfo-N-acetyl-beta-D-glucosaminyl-(1-&gt;6)]-N-acetyl-alpha-D-galactosaminyl}-L-seryl-[protein] + UDP + H(+). The catalysed reaction is 3-O-{beta-D-galactosyl-(1-&gt;3)-[6-O-sulfo-N-acetyl-beta-D-glucosaminyl-(1-&gt;6)]-N-acetyl-alpha-D-galactosaminyl}-L-threonyl-[protein] + UDP-alpha-D-galactose = 3-O-{beta-D-galactosyl-(1-&gt;3)-[beta-D-galactosyl-(1-&gt;4)-6-O-sulfo-N-acetyl-beta-D-glucosaminyl-(1-&gt;6)]-N-acetyl-alpha-D-galactosaminyl}-L-threonyl-[protein] + UDP + H(+). It participates in protein modification; protein glycosylation. Its pathway is glycolipid biosynthesis. With respect to regulation, up-regulated by LALBA. In terms of biological role, galactose (Gal) transferase involved in the synthesis of terminal N-acetyllactosamine (LacNac) unit present on glycan chains of glycoproteins and glycosphingolipids. Catalyzes the transfer of Gal residue via a beta1-&gt;4 linkage from UDP-Gal to the non-reducing terminal N-acetyl glucosamine 6-O-sulfate (6-O-sulfoGlcNAc) in the linearly growing chain of both N- and O-linked keratan sulfate proteoglycans. Cooperates with B3GNT7 N-acetyl glucosamine transferase and CHST6 and CHST1 sulfotransferases to construct and elongate mono- and disulfated disaccharide units [-&gt;3Galbeta1-&gt;4(6-sulfoGlcNAcbeta)1-&gt;] and [-&gt;3(6-sulfoGalbeta)1-&gt;4(6-sulfoGlcNAcbeta)1-&gt;] within keratan sulfate polymer. Transfers Gal residue via a beta1-&gt;4 linkage to terminal 6-O-sulfoGlcNAc within the LacNac unit of core 2 O-glycans forming 6-sulfo-sialyl-Lewis X (sLex). May contribute to the generation of sLex epitope on mucin-type glycoproteins that serve as ligands for SELL/L-selectin, a major regulator of leukocyte migration. In the biosynthesis pathway of neolacto-series glycosphingolipids, transfers Gal residue via a beta1-&gt;4 linkage to terminal GlcNAc of a lactotriaosylceramide (Lc3Cer) acceptor to form a neolactotetraosylceramide. In Homo sapiens (Human), this protein is Beta-1,4-galactosyltransferase 4.